Consider the following 184-residue polypeptide: Endoribonuclease YbeY (184 aa).

Residues His-151, His-155, and His-161 each contribute to the Zn(2+) site.

It belongs to the endoribonuclease YbeY family. Zn(2+) serves as cofactor.

The protein localises to the cytoplasm. Functionally, single strand-specific metallo-endoribonuclease involved in late-stage 70S ribosome quality control and in maturation of the 3' terminus of the 16S rRNA. The sequence is that of Endoribonuclease YbeY from Prochlorococcus marinus (strain NATL2A).